A 206-amino-acid polypeptide reads, in one-letter code: Small ribosomal subunit protein uS4 (206 aa).

The region spanning Gly96 to Lys156 is the S4 RNA-binding domain.

This sequence belongs to the universal ribosomal protein uS4 family. As to quaternary structure, part of the 30S ribosomal subunit. Contacts protein S5. The interaction surface between S4 and S5 is involved in control of translational fidelity.

Functionally, one of the primary rRNA binding proteins, it binds directly to 16S rRNA where it nucleates assembly of the body of the 30S subunit. With S5 and S12 plays an important role in translational accuracy. In Haemophilus influenzae (strain ATCC 51907 / DSM 11121 / KW20 / Rd), this protein is Small ribosomal subunit protein uS4.